The sequence spans 352 residues: C-C chemokine receptor type 5 (352 aa).

The Extracellular portion of the chain corresponds to 1–30; it reads MDYQVSSPTYDIDYYTSEPCQKVNVKQIAA. Position 3 is a sulfotyrosine (Y3). 2 O-linked (GalNAc...) serine glycosylation sites follow: S6 and S7. 3 positions are modified to sulfotyrosine: Y10, Y14, and Y15. 2 cysteine pairs are disulfide-bonded: C20/C269 and C101/C178. The chain crosses the membrane as a helical span at residues 31–58; sequence RLLPPLYSLVFIFGFVGNILVVLILINC. The Cytoplasmic portion of the chain corresponds to 59 to 68; the sequence is KRLKSMTDIY. A helical transmembrane segment spans residues 69–89; that stretch reads LLNLAISDLFFLLTVPFWAHY. Residues 90–102 are Extracellular-facing; it reads AAAQWDFGNTMCQ. The chain crosses the membrane as a helical span at residues 103–124; it reads LLTGLYFIGFFSGIFFIILLTI. At 125-141 the chain is on the cytoplasmic side; that stretch reads DRYLAIVHAVFALKART. A helical transmembrane segment spans residues 142 to 166; the sequence is VTFGVVTSVITWVVAVFASLPGIIF. Over 167–198 the chain is Extracellular; that stretch reads TRSQREGLHYTCSSHFPYSQYQFWKNFQTLKI. Residues 199–218 traverse the membrane as a helical segment; that stretch reads VILGLVLPLLVMVICYSGIL. The Cytoplasmic portion of the chain corresponds to 219–235; it reads KTLLRCRNEKKRHRAVR. A helical transmembrane segment spans residues 236–260; sequence LIFTIMIVYFLFWAPYNIVLLLNTF. Over 261–277 the chain is Extracellular; the sequence is QEFFGLNNCSSSNRLDQ. The chain crosses the membrane as a helical span at residues 278–301; the sequence is AMQVTETLGMTHCCINPIIYAFVG. Topologically, residues 302–352 are cytoplasmic; sequence EKFRNYLLVFFQKHIAKRFCKCCYIFQQEAPERASSVYTRSTGEQEISVGL. Residues C321, C323, and C324 are each lipidated (S-palmitoyl cysteine). S336, S337, S342, and S349 each carry phosphoserine; by BARK1.

The protein belongs to the G-protein coupled receptor 1 family. In terms of assembly, interacts with PRAF2. Efficient ligand binding to CCL3/MIP-1alpha and CCL4/MIP-1beta requires sulfation, O-glycosylation and sialic acid modifications. Glycosylation on Ser-6 is required for efficient binding of CCL4. Interacts with GRK2. Interacts with ARRB1 and ARRB2. Interacts with CNIH4. Interacts with S100A4; this interaction stimulates T-lymphocyte chemotaxis. In terms of processing, sulfated on at least 2 of the N-terminal tyrosines. Sulfation is required for efficient binding of the chemokines, CCL3 and CCL4. Palmitoylation in the C-terminal is important for cell surface expression. Post-translationally, phosphorylation on serine residues in the C-terminal is stimulated by binding CC chemokines especially by APO-RANTES. In terms of processing, O-glycosylated, but not N-glycosylated. Ser-6 appears to be the major site even if Ser-7 may be also O-glycosylated. Also sialylated glycans present which contribute to chemokine binding. Thr-16 and Ser-17 may also be glycosylated and, if so, with small moieties such as a T-antigen.

It is found in the cell membrane. In terms of biological role, receptor for a number of inflammatory CC-chemokines including CCL3/MIP-1-alpha, CCL4/MIP-1-beta and RANTES and subsequently transduces a signal by increasing the intracellular calcium ion level. May play a role in the control of granulocytic lineage proliferation or differentiation. Participates in T-lymphocyte migration to the infection site by acting as a chemotactic receptor. In Rhinopithecus bieti (Black snub-nosed monkey), this protein is C-C chemokine receptor type 5 (CCR5).